Consider the following 66-residue polypeptide: MAKGKDVRVTIILECTSCVRNDIKKESSGISRYITQKNRHNTPSRLELRKFCPYCYKHTIHGEIKK.

The protein belongs to the bacterial ribosomal protein bL33 family.

The protein localises to the plastid. It is found in the chloroplast. The sequence is that of Large ribosomal subunit protein bL33c from Nasturtium officinale (Watercress).